A 95-amino-acid chain; its full sequence is Feather keratin B-4 (95 aa).

Position 1 is an N-acetylserine (Ser1).

Belongs to the avian keratin family. As to quaternary structure, the avian keratins (F-ker, S-ker, C-ker and B-ker) are a complex mixture of very similar polypeptides.

The polypeptide is Feather keratin B-4 (Anas platyrhynchos (Mallard)).